The sequence spans 298 residues: Nucleotide-binding protein MAV_3359 (298 aa).

Residue G18–G25 participates in ATP binding. D69–S72 lines the GTP pocket.

Belongs to the RapZ-like family.

Its function is as follows. Displays ATPase and GTPase activities. In Mycobacterium avium (strain 104), this protein is Nucleotide-binding protein MAV_3359.